A 331-amino-acid polypeptide reads, in one-letter code: Syntaxin-43 (331 aa).

At 1 to 305 (MATRNRTLLF…KAERTQRQGG (305 aa)) the chain is on the cytoplasmic side. Disordered stretches follow at residues 20–45 (VRAP…KSGL) and 59–80 (PNRS…GTIT). Positions 31–40 (TLTEHNSLTG) are enriched in polar residues. The stretch at 124 to 154 (KEDQHQIETLTQEVTFLLKKSEKQLQRLSAA) forms a coiled coil. One can recognise a t-SNARE coiled-coil homology domain in the interval 235–297 (EEISIEREKE…DDGLKQLQKA (63 aa)). Residues 306-326 (MVMCASVLVILCFIMLVLLIL) form a helical; Anchor for type IV membrane protein membrane-spanning segment. The Vesicular segment spans residues 327 to 331 (KEILL).

The protein belongs to the syntaxin family. Part of the t-SNARE complex. In terms of tissue distribution, expressed at low levels in roots, stems, flowers and leaves.

Its subcellular location is the golgi apparatus. It localises to the trans-Golgi network membrane. Contributes to the regulation of secretory and vacuolar transport pathways in the post-Golgi network, and to the maintenance of the Golgi apparatus and trans-Golgi network (TGN) morphologies. Vesicle trafficking protein that functions in the secretory pathway and mediates liposome fusion. Required for extracellular resistance responses to a fungal pathogen. Also involved in the protection of chloroplasts from salicylic acid-dependent biotic stress. This Arabidopsis thaliana (Mouse-ear cress) protein is Syntaxin-43.